The chain runs to 122 residues: Large ribosomal subunit protein uL18 (122 aa).

It belongs to the universal ribosomal protein uL18 family. As to quaternary structure, part of the 50S ribosomal subunit; part of the 5S rRNA/L5/L18/L25 subcomplex. Contacts the 5S and 23S rRNAs.

In terms of biological role, this is one of the proteins that bind and probably mediate the attachment of the 5S RNA into the large ribosomal subunit, where it forms part of the central protuberance. In Desulfitobacterium hafniense (strain Y51), this protein is Large ribosomal subunit protein uL18.